A 100-amino-acid chain; its full sequence is RxLR effector protein SFI8 (100 aa).

The N-terminal stretch at 1-22 (MRSILYAVLAFAVLARSSAVAA) is a signal peptide. The short motif at 43-57 (RSLRVEAQEVIQSGR) is the RxLR-dEER element. The Calmodulin-binding motif motif lies at 78–82 (KPDIK).

The protein belongs to the RxLR effector family. In terms of assembly, interacts with the host calmodulin.

The protein resides in the secreted. Its subcellular location is the host nucleus. The protein localises to the host cytoplasm. Its function is as follows. Effector that suppresses flg22-induced post-translational MAP kinase activation both tomato and Arabidopsis. The perception of highly conserved pathogen- or microbe-associated molecular patterns (PAMPs/MAMPs), such as flg22, triggers converging signaling pathways recruiting MAP kinase cascades and inducing transcriptional re-programming, yielding a generic antimicrobial response. Associates with calmodulin to interfere with plant defense-associated calcium signaling in hosts. This Phytophthora infestans (strain T30-4) (Potato late blight agent) protein is RxLR effector protein SFI8.